The chain runs to 617 residues: MISYTYITALSILVLNVLNVACTSVDDWPNLSPQIEIALRSQRDIGKYISIDQVTGMGVSLNTLVFDKDGYTLDALNDVSTLLDVGVQTLMINLYWNEFTQKWQLCPAPFPANISSDITTSKELYWDGRTYKCEASLTVDSLVRTINTYLAETNTNIKVNMVHLLFHLKSIRIDPPSGNVSSSEIKDYISTFQPTDSHFVALNNATLNDTVSSFGTSLFTPSDLSSYRKSNYRKGDKVGFYNETRKSFPNLNTFLLLDYKRVMTTVIANDLVKSQYTYNVTSSDKKSVFLEGSGVDTTVASLSDPDAVSQCNELIHYNQDNIEVFDNISLKEHFRIVVDDNGTSFTNVTFSDFVRCGFSPILNASYYNVYNDEEGVSEIDGSLSDIVDNFIPLSFWSWAENQLIEPNRGLNISDSTDTDNDEERDDNDNDDPLVRRDMDYKSSHTAFKCVVLDENGWKVSDCYSRQPIACQKSGSPNDWHIDVKTKREYFTAYKDDSCPDDYNFGIPSSSIEMLALMSYIERENISYPVWIDMNDITVPDCFVTGGPYATCPYQMTVTRLKLAGLIAPSFIVAVVILALILCEKIFRTNPIQSNRKRHWKKAINKYVEKYDYEGVPS.

The first 22 residues, 1 to 22 (MISYTYITALSILVLNVLNVAC), serve as a signal peptide directing secretion. Over 23–561 (TSVDDWPNLS…PYQMTVTRLK (539 aa)) the chain is Extracellular. Asn113, Asn179, Asn204, Asn208, Asn242, Asn279, Asn327, Asn341, Asn347, Asn363, and Asn411 each carry an N-linked (GlcNAc...) asparagine glycan. The tract at residues 409–435 (GLNISDSTDTDNDEERDDNDNDDPLVR) is disordered. The span at 416-431 (TDTDNDEERDDNDNDD) shows a compositional bias: acidic residues. The N-linked (GlcNAc...) asparagine glycan is linked to Asn524. The helical transmembrane segment at 562 to 582 (LAGLIAPSFIVAVVILALILC) threads the bilayer. Residues 583 to 617 (EKIFRTNPIQSNRKRHWKKAINKYVEKYDYEGVPS) are Cytoplasmic-facing.

Belongs to the MTC6 family.

It localises to the membrane. May be involved in telomere capping. This Debaryomyces hansenii (strain ATCC 36239 / CBS 767 / BCRC 21394 / JCM 1990 / NBRC 0083 / IGC 2968) (Yeast) protein is Maintenance of telomere capping protein 6 (MTC6).